We begin with the raw amino-acid sequence, 856 residues long: Probable alpha,alpha-trehalose-phosphate synthase [UDP-forming] 8 (856 aa).

The residue at position 5 (S5) is a Phosphoserine. T32 is subject to Phosphothreonine. Residues 57 to 541 (ERKIIVANML…AKSFMQDLER (485 aa)) form a glycosyltransferase region.

The protein in the N-terminal section; belongs to the glycosyltransferase 20 family. This sequence in the C-terminal section; belongs to the trehalose phosphatase family. In terms of tissue distribution, expressed in leaves, roots, stems and flowers.

It catalyses the reaction D-glucose 6-phosphate + UDP-alpha-D-glucose = alpha,alpha-trehalose 6-phosphate + UDP + H(+). The sequence is that of Probable alpha,alpha-trehalose-phosphate synthase [UDP-forming] 8 (TPS8) from Arabidopsis thaliana (Mouse-ear cress).